The following is a 469-amino-acid chain: Ribulose bisphosphate carboxylase large chain (469 aa).

Lysine 5 is modified (N6,N6,N6-trimethyllysine). 2 residues coordinate substrate: asparagine 114 and threonine 164. Lysine 166 serves as the catalytic Proton acceptor. Substrate is bound at residue lysine 168. Mg(2+) is bound by residues lysine 192, aspartate 194, and glutamate 195. At lysine 192 the chain carries N6-carboxylysine. Histidine 285 (proton acceptor) is an active-site residue. Residues arginine 286, histidine 318, and serine 370 each coordinate substrate.

The protein belongs to the RuBisCO large chain family. Type I subfamily. Heterohexadecamer of 8 large chains and 8 small chains; disulfide-linked. The disulfide link is formed within the large subunit homodimers. Mg(2+) is required as a cofactor. The disulfide bond which can form in the large chain dimeric partners within the hexadecamer appears to be associated with oxidative stress and protein turnover.

It localises to the plastid. The protein localises to the chloroplast. The enzyme catalyses 2 (2R)-3-phosphoglycerate + 2 H(+) = D-ribulose 1,5-bisphosphate + CO2 + H2O. It carries out the reaction D-ribulose 1,5-bisphosphate + O2 = 2-phosphoglycolate + (2R)-3-phosphoglycerate + 2 H(+). Its function is as follows. RuBisCO catalyzes two reactions: the carboxylation of D-ribulose 1,5-bisphosphate, the primary event in carbon dioxide fixation, as well as the oxidative fragmentation of the pentose substrate in the photorespiration process. Both reactions occur simultaneously and in competition at the same active site. The polypeptide is Ribulose bisphosphate carboxylase large chain (Fleroya rubrostipulata (Mitragyna rubrostipulata)).